The following is a 542-amino-acid chain: Nuclear speckle splicing regulatory protein 1 (542 aa).

Positions 21–53 are disordered; it reads RVLQKPSVFGSDSDDDETSVSESLQREAAKKQA. Residues S27, S31, and S33 each carry the phosphoserine modification. A coiled-coil region spans residues 103–172; that stretch reads IHNLLKAVEI…RAAALEAHLD (70 aa). Residues 105 to 169 are necessary for alternative splicing activity; it reads NLLKAVEIRK…REKRAAALEA (65 aa). Residues 190-516 are disordered; it reads AVGEEAAPKS…FAKRSNEETV (327 aa). Residues K198 and K209 each participate in a glycyl lysine isopeptide (Lys-Gly) (interchain with G-Cter in SUMO2) cross-link. Residues 200–217 are compositionally biased toward basic and acidic residues; it reads SFREARTVIKEEKLRGYP. The span at 223-232 shows a compositional bias: polar residues; the sequence is ESRPPQQSCV. A compositionally biased stretch (acidic residues) spans 239–256; sequence EAEENPDADREFDDESSE. Residues S254 and S255 each carry the phosphoserine modification. Residues 257 to 271 show a composition bias toward basic and acidic residues; the sequence is DGEKRDHKVKSRGED. Position 277 is an N6-acetyllysine (K277). Basic residues predominate over residues 277-288; sequence KHPKHHKNRAHS. Residue K280 forms a Glycyl lysine isopeptide (Lys-Gly) (interchain with G-Cter in SUMO2) linkage. 3 stretches are compositionally biased toward basic and acidic residues: residues 309–335, 343–475, and 485–501; these read RGHEHQDRQSRDQESCHKDRSHREEKS, SHKD…KPSH, and RLAEERPEKGSEQERPP. Residues 372-413 adopt a coiled-coil conformation; sequence KREKYSSREQERDRQRNDHDRYSEKEKKRKEKEEHTKARRER. Phosphoserine is present on S443.

Belongs to the NSRP1 family. Interacts (via C-terminus) with SRSF1. Interacts (via C-terminus) with SRSF2.

Its subcellular location is the nucleus. The protein resides in the nucleus speckle. Functionally, RNA-binding protein that mediates pre-mRNA alternative splicing regulation. The chain is Nuclear speckle splicing regulatory protein 1 (Nsrp1) from Mus musculus (Mouse).